The following is a 309-amino-acid chain: Elongation factor Ts (309 aa).

Residues threonine 98–valine 101 form an involved in Mg(2+) ion dislocation from EF-Tu region.

The protein belongs to the EF-Ts family.

It is found in the cytoplasm. Associates with the EF-Tu.GDP complex and induces the exchange of GDP to GTP. It remains bound to the aminoacyl-tRNA.EF-Tu.GTP complex up to the GTP hydrolysis stage on the ribosome. This is Elongation factor Ts from Orientia tsutsugamushi (strain Boryong) (Rickettsia tsutsugamushi).